A 206-amino-acid chain; its full sequence is MPRPASHLAPMPSDHPDFRSKSARLRCQPPRTNNCGTFKQPPSVAATSRPKPGNPFLQPPTKGTPPPKKKKKNHTEGCHTHEANPEPNTKHTETESPKPQTSTQHHTPITIPSSLLSQNTQREKRGLPLLTSRPSTIPANTYQPQSPHIHSHTPLQRPISTALLHQNLHIRARNIRHTGRLHGSPTKGAQTAQQAQPHPPKQLATL.

Disordered regions lie at residues 1-153 and 179-206; these read MPRP…HSHT and GRLH…LATL. Basic and acidic residues predominate over residues 74 to 96; sequence HTEGCHTHEANPEPNTKHTETES. Polar residues-rich tracts occupy residues 97–120 and 132–148; these read PKPQ…SQNT and SRPS…QSPH.

Belongs to the UPF0328 family.

This is UPF0328 protein ECU01_0050/ECU01_1560 from Encephalitozoon cuniculi (strain GB-M1) (Microsporidian parasite).